Here is a 78-residue protein sequence, read N- to C-terminus: Toxin BmTxKS4 (78 aa).

The first 21 residues, 1-21, serve as a signal peptide directing secretion; that stretch reads MKLKISFLILVLFSVFFAIEG. A propeptide spanning residues 22–32 is cleaved from the precursor; the sequence is IIKWFPASVNG.

Post-translationally, contains 3 disulfide bonds. Expressed by the venom gland.

Its subcellular location is the secreted. Functionally, reversibly inhibits potassium channels. The chain is Toxin BmTxKS4 from Olivierus martensii (Manchurian scorpion).